A 173-amino-acid polypeptide reads, in one-letter code: Ribosome maturation factor RimM (173 aa).

Residues 96–169 form the PRC barrel domain; sequence PDEFYDHQLE…LITIDPPDGL (74 aa).

This sequence belongs to the RimM family. In terms of assembly, binds ribosomal protein uS19.

It localises to the cytoplasm. Functionally, an accessory protein needed during the final step in the assembly of 30S ribosomal subunit, possibly for assembly of the head region. Essential for efficient processing of 16S rRNA. May be needed both before and after RbfA during the maturation of 16S rRNA. It has affinity for free ribosomal 30S subunits but not for 70S ribosomes. The protein is Ribosome maturation factor RimM of Mycolicibacterium gilvum (strain PYR-GCK) (Mycobacterium gilvum (strain PYR-GCK)).